A 187-amino-acid polypeptide reads, in one-letter code: Adenylate kinase (187 aa).

Residue 10 to 15 (GSGKGT) participates in ATP binding. The interval 30–59 (STGDLLRSEVVAGTPLGLQAKQVMAQGDLV) is NMP. Residues T31, R36, 57 to 59 (DLV), 85 to 88 (GYPR), and Q92 contribute to the AMP site. Positions 126–136 (GRAQAEGREDD) are LID. Residue R127 coordinates ATP. The AMP site is built by R133 and R144. Residue G172 coordinates ATP.

This sequence belongs to the adenylate kinase family. In terms of assembly, monomer.

The protein resides in the cytoplasm. The enzyme catalyses AMP + ATP = 2 ADP. It functions in the pathway purine metabolism; AMP biosynthesis via salvage pathway; AMP from ADP: step 1/1. In terms of biological role, catalyzes the reversible transfer of the terminal phosphate group between ATP and AMP. Plays an important role in cellular energy homeostasis and in adenine nucleotide metabolism. The protein is Adenylate kinase of Xylella fastidiosa (strain 9a5c).